The primary structure comprises 141 residues: Large ribosomal subunit protein uL11 (141 aa).

It belongs to the universal ribosomal protein uL11 family. Part of the ribosomal stalk of the 50S ribosomal subunit. Interacts with L10 and the large rRNA to form the base of the stalk. L10 forms an elongated spine to which L12 dimers bind in a sequential fashion forming a multimeric L10(L12)X complex. One or more lysine residues are methylated.

In terms of biological role, forms part of the ribosomal stalk which helps the ribosome interact with GTP-bound translation factors. This Lactobacillus acidophilus (strain ATCC 700396 / NCK56 / N2 / NCFM) protein is Large ribosomal subunit protein uL11.